The primary structure comprises 571 residues: Proline--tRNA ligase (571 aa).

This sequence belongs to the class-II aminoacyl-tRNA synthetase family. ProS type 1 subfamily. Homodimer.

It is found in the cytoplasm. It carries out the reaction tRNA(Pro) + L-proline + ATP = L-prolyl-tRNA(Pro) + AMP + diphosphate. Its function is as follows. Catalyzes the attachment of proline to tRNA(Pro) in a two-step reaction: proline is first activated by ATP to form Pro-AMP and then transferred to the acceptor end of tRNA(Pro). As ProRS can inadvertently accommodate and process non-cognate amino acids such as alanine and cysteine, to avoid such errors it has two additional distinct editing activities against alanine. One activity is designated as 'pretransfer' editing and involves the tRNA(Pro)-independent hydrolysis of activated Ala-AMP. The other activity is designated 'posttransfer' editing and involves deacylation of mischarged Ala-tRNA(Pro). The misacylated Cys-tRNA(Pro) is not edited by ProRS. This chain is Proline--tRNA ligase, found in Aliivibrio salmonicida (strain LFI1238) (Vibrio salmonicida (strain LFI1238)).